Consider the following 482-residue polypeptide: Catalase (482 aa).

Polar residues predominate over residues 1 to 23; that stretch reads MSQNKTLTTASGPPVADNQNSRS. The disordered stretch occupies residues 1–28; it reads MSQNKTLTTASGPPVADNQNSRSAGPRG. Catalysis depends on residues H55 and N128. Y338 contacts heme. Residues 370–395 are disordered; the sequence is SMAFGSNGGAAPNYEPNSYADAPKQA.

The protein belongs to the catalase family. Requires heme as cofactor.

The catalysed reaction is 2 H2O2 = O2 + 2 H2O. Its function is as follows. Decomposes hydrogen peroxide into water and oxygen; serves to protect cells from the toxic effects of hydrogen peroxide. The chain is Catalase (cat) from Onchocerca volvulus endobacterium.